Consider the following 141-residue polypeptide: Hemoglobin subunit alpha-1 (141 aa).

Residues 1 to 141 enclose the Globin domain; that stretch reads VLSGSDKNNV…VGNVLTAKYR (141 aa). O2 is bound at residue His-58. His-87 is a heme b binding site.

Belongs to the globin family. Heterotetramer of two alpha chains and two beta chains. In terms of tissue distribution, red blood cells.

Its function is as follows. Involved in oxygen transport from the lung to the various peripheral tissues. The sequence is that of Hemoglobin subunit alpha-1 from Stercorarius maccormicki (South polar skua).